The primary structure comprises 447 residues: Adenylosuccinate synthetase (447 aa).

Residues 12–18 (GDEGKGK) and 40–42 (GHT) contribute to the GTP site. D13 serves as the catalytic Proton acceptor. Mg(2+) contacts are provided by D13 and G40. Residues 13 to 16 (DEGK), 38 to 41 (NAGH), T128, R142, Q223, T238, and R302 contribute to the IMP site. H41 serves as the catalytic Proton donor. 298 to 304 (TTTGRKR) is a substrate binding site. Residues R304, 330–332 (KLD), and 412–414 (SLG) each bind GTP.

Belongs to the adenylosuccinate synthetase family. In terms of assembly, homodimer. The cofactor is Mg(2+).

Its subcellular location is the cytoplasm. The catalysed reaction is IMP + L-aspartate + GTP = N(6)-(1,2-dicarboxyethyl)-AMP + GDP + phosphate + 2 H(+). It participates in purine metabolism; AMP biosynthesis via de novo pathway; AMP from IMP: step 1/2. Plays an important role in the de novo pathway of purine nucleotide biosynthesis. Catalyzes the first committed step in the biosynthesis of AMP from IMP. This is Adenylosuccinate synthetase from Trichormus variabilis (strain ATCC 29413 / PCC 7937) (Anabaena variabilis).